The chain runs to 476 residues: Nyctalopin (476 aa).

The signal sequence occupies residues 1 to 18 (MLILLLHAVVFSLPYTRA). Residues 19-57 (TEACLRACPAACTCSHVERGCSVRCDRAGLQRVPQEFPC) enclose the LRRNT domain. 11 LRR repeats span residues 58–79 (EAAS…AFGT), 82–103 (SLRR…AFKG), 106–128 (RLAE…TFAA), 131–154 (RLRR…AELP), 155–177 (ALRE…RGLA), 178–199 (NLTH…SLLG), 202–223 (RLRS…AFGD), 226–247 (ALED…AFRG), 250–271 (RLRT…WFSD), 274–295 (ELEL…AFQN), and 298–319 (GLLA…AFQP). Asn92 is a glycosylation site (N-linked (GlcNAc...) asparagine). Asn178 carries N-linked (GlcNAc...) asparagine glycosylation. Residue Asn295 is glycosylated (N-linked (GlcNAc...) asparagine). An LRRCT domain is found at 331 to 383 (NPWRCDCQLEWLRDWMEGSGRVADVACASPGSVAGQDLSQVVFERSSDGLCVD). Asn388, Asn427, Asn434, and Asn438 each carry an N-linked (GlcNAc...) asparagine glycan.

Belongs to the small leucine-rich proteoglycan (SLRP) family. SLRP class IV subfamily. In terms of tissue distribution, expressed abundantly in retina with lower levels in brain, lung, spleen and testis. Not detected in kidney, heart or liver. In the retina, highest expression found in the inner nuclear layer and ganglion cell layer.

The protein resides in the secreted. Its subcellular location is the extracellular space. It localises to the extracellular matrix. This Mus musculus (Mouse) protein is Nyctalopin (Nyx).